Here is a 157-residue protein sequence, read N- to C-terminus: UPF0178 protein BH1374 (157 aa).

It belongs to the UPF0178 family.

The sequence is that of UPF0178 protein BH1374 from Halalkalibacterium halodurans (strain ATCC BAA-125 / DSM 18197 / FERM 7344 / JCM 9153 / C-125) (Bacillus halodurans).